A 514-amino-acid polypeptide reads, in one-letter code: Bifunctional purine biosynthesis protein PurH (514 aa).

The MGS-like domain occupies 1–145 (MIKRALISVS…KNYQDVVVIV (145 aa)).

Belongs to the PurH family.

The catalysed reaction is (6R)-10-formyltetrahydrofolate + 5-amino-1-(5-phospho-beta-D-ribosyl)imidazole-4-carboxamide = 5-formamido-1-(5-phospho-D-ribosyl)imidazole-4-carboxamide + (6S)-5,6,7,8-tetrahydrofolate. It catalyses the reaction IMP + H2O = 5-formamido-1-(5-phospho-D-ribosyl)imidazole-4-carboxamide. Its pathway is purine metabolism; IMP biosynthesis via de novo pathway; 5-formamido-1-(5-phospho-D-ribosyl)imidazole-4-carboxamide from 5-amino-1-(5-phospho-D-ribosyl)imidazole-4-carboxamide (10-formyl THF route): step 1/1. It functions in the pathway purine metabolism; IMP biosynthesis via de novo pathway; IMP from 5-formamido-1-(5-phospho-D-ribosyl)imidazole-4-carboxamide: step 1/1. This chain is Bifunctional purine biosynthesis protein PurH, found in Acetivibrio thermocellus (strain ATCC 27405 / DSM 1237 / JCM 9322 / NBRC 103400 / NCIMB 10682 / NRRL B-4536 / VPI 7372) (Clostridium thermocellum).